The chain runs to 106 residues: Large ribosomal subunit protein bL21 (106 aa).

Belongs to the bacterial ribosomal protein bL21 family. In terms of assembly, part of the 50S ribosomal subunit. Contacts protein L20.

Functionally, this protein binds to 23S rRNA in the presence of protein L20. The chain is Large ribosomal subunit protein bL21 from Thermosipho africanus (strain TCF52B).